A 453-amino-acid chain; its full sequence is Serine/threonine-protein phosphatase 2A regulatory subunit B'' subunit gamma (453 aa).

The disordered stretch occupies residues 1–27 (MDWKDVLRRRLASPNSDPKRKKSEQEL). EF-hand domains follow at residues 273-308 (PSAL…TMTN) and 341-376 (KEPA…IQEL). The Ca(2+) site is built by D286, D288, N290, M292, and E297.

In terms of assembly, interacts with MCM3AP/GANP, PPP5C, and the phosphatase 2A core enzyme composed of the PPP2CA catalytic subunit and the constant regulatory subunit PPP2R1A. Finds in a complex with ABCB1, TFPI2 and PPP2R3C; leading to the dephosphorylation of ABCB1.

It localises to the nucleus. It is found in the cytoplasm. In terms of biological role, may regulate MCM3AP phosphorylation through phosphatase recruitment. May act as a negative regulator of ABCB1 expression and function through the dephosphorylation of ABCB1 by TFPI2/PPP2R3C complex. May play a role in the activation-induced cell death of B-cells. This is Serine/threonine-protein phosphatase 2A regulatory subunit B'' subunit gamma (Ppp2r3c) from Rattus norvegicus (Rat).